The sequence spans 1034 residues: Multidrug export protein AcrF (1034 aa).

Over Met1–Pro9 the chain is Cytoplasmic. A helical membrane pass occupies residues Ile10–Leu28. At Gln29–Glu339 the chain is on the periplasmic side. The chain crosses the membrane as a helical span at residues Val340–Leu359. Topologically, residues Gln360–Thr365 are cytoplasmic. The helical transmembrane segment at Leu366–Ala385 threads the bilayer. Topologically, residues Phe386–Asn391 are periplasmic. A helical transmembrane segment spans residues Thr392–Val413. At Glu414 to Ala441 the chain is on the cytoplasmic side. Residues Leu442 to Gly460 form a helical membrane-spanning segment. Over Gly461–Thr473 the chain is Periplasmic. Residues Ile474–Leu496 form a helical membrane-spanning segment. Residues Leu497–Thr537 lie on the Cytoplasmic side of the membrane. The chain crosses the membrane as a helical span at residues Gly538 to Leu556. Over Arg557–Gln871 the chain is Periplasmic. Residues Ala872–Tyr891 traverse the membrane as a helical segment. Topologically, residues Glu892–Pro897 are cytoplasmic. A helical membrane pass occupies residues Val898 to Leu917. At Phe918–Asp923 the chain is on the periplasmic side. Residues Val924–Val945 traverse the membrane as a helical segment. Over Glu946–Pro973 the chain is Cytoplasmic. Residues Ile974 to Asn992 form a helical membrane-spanning segment. The Periplasmic segment spans residues Gly993–Gly1005. A helical transmembrane segment spans residues Val1006–Ile1028. Topologically, residues Arg1029–Gly1034 are cytoplasmic.

The protein belongs to the resistance-nodulation-cell division (RND) (TC 2.A.6) family. In terms of assembly, part of the tripartite efflux system AcrEF-TolC, which is composed of an inner membrane transporter, AcrF, a periplasmic membrane fusion protein, AcrE, and an outer membrane component, TolC. The complex forms a large protein conduit and can translocate molecules across both the inner and outer membranes.

Its subcellular location is the cell inner membrane. Functionally, part of the tripartite efflux system AcrEF-TolC. Involved in the efflux of indole and organic solvents. This Escherichia coli (strain K12) protein is Multidrug export protein AcrF (acrF).